The following is a 62-amino-acid chain: MENIKTTTEQLRTEANIQRKKVSEVAKDLVEFCEKNKATDMLVSGPLDAHNPFQEKKSCSVL.

A Cysteine methyl ester modification is found at cysteine 59. The S-geranylgeranyl cysteine moiety is linked to residue cysteine 59. A propeptide spans 60 to 62 (SVL) (removed in mature form).

This sequence belongs to the G protein gamma family. G proteins are composed of 3 units, alpha, beta and gamma. Interacts with gpb-1 and gpb-2.

It is found in the cell membrane. Guanine nucleotide-binding proteins (G proteins) are involved as a modulator or transducer in various transmembrane signaling systems. The beta and gamma chains are required for the GTPase activity, for replacement of GDP by GTP, and for G protein-effector interaction. This is Guanine nucleotide-binding protein subunit gamma (gpc-1) from Caenorhabditis briggsae.